Reading from the N-terminus, the 259-residue chain is Major prion protein (259 aa).

The N-terminal stretch at 1 to 24 (MGKIQLGYWILVLFIVTWSDLGLC) is a signal peptide. The segment at 25 to 235 (KKPKPRPGGG…EYEAAAQRAY (211 aa)) is interaction with GRB2, ERI3 and SYN1. The disordered stretch occupies residues 29 to 110 (PRPGGGWNSG…GYNKWKPDKP (82 aa)). Cu(2+) is bound by residues glycine 63, glycine 64, histidine 72, glycine 74, histidine 82, glycine 84, histidine 92, and glycine 94. A compositionally biased stretch (gly residues) spans 91-101 (PHGGSNWGQGG). The cysteines at positions 184 and 219 are disulfide-linked. Asparagine 186 and asparagine 202 each carry an N-linked (GlcNAc...) asparagine glycan. Asparagine 236 carries GPI-anchor amidated asparagine lipidation. The propeptide at 237-259 (MAFFSAPPVTLLFLSFLIFLIVS) is removed in mature form.

It belongs to the prion family. Monomer and homodimer. Has a tendency to aggregate into amyloid fibrils containing a cross-beta spine, formed by a steric zipper of superposed beta-strands. Soluble oligomers may represent an intermediate stage on the path to fibril formation. Copper binding may promote oligomerization. Interacts with GRB2, APP, ERI3/PRNPIP and SYN1. Mislocalized cytosolically exposed PrP interacts with MGRN1; this interaction alters MGRN1 subcellular location and causes lysosomal enlargement. Interacts with KIAA1191.

The protein localises to the cell membrane. It localises to the golgi apparatus. Functionally, its primary physiological function is unclear. Has cytoprotective activity against internal or environmental stresses. May play a role in neuronal development and synaptic plasticity. May be required for neuronal myelin sheath maintenance. May play a role in iron uptake and iron homeostasis. Soluble oligomers are toxic to cultured neuroblastoma cells and induce apoptosis (in vitro). Association with GPC1 (via its heparan sulfate chains) targets PRNP to lipid rafts. Also provides Cu(2+) or Zn(2+) for the ascorbate-mediated GPC1 deaminase degradation of its heparan sulfate side chains. The sequence is that of Major prion protein (PRNP) from Trichosurus vulpecula (Brush-tailed possum).